A 1057-amino-acid polypeptide reads, in one-letter code: QLSYGYDEKSAGGISVPGPMGPSGPRGLPGPPGAPGPQGFQGPPGEPGEPGASGPMGPRGPPGPPGKNGDDGEAGKPGRPGERGPPGPQGARGLPGTAGLPGMKGHRGFSGLDGAKGDAGPAGPKGEPGSPGENGAPGQMGPRGLPGERGRPGAPGPAGARGNDGATGAAGPPGPTGPAGPPGFPGAVGAKGEAGPQGARGSEGPQGVRGEPGPPGPAGAAGPAGNPGADGQPGAKGANGAPGIAGAPGFPGARGPAGPQGPSGAPGPKGNSGEPGAPGSKGDAGAKGEPGPIGIQGPPGPAGEEGKRGARGEPGPTGLPGPPGERGGPGSRGFPGADGVAGPKGPAGERGSPGPAGPKGSPGEAGRPGEAGLPGAKGLTGSPGSPGPDGKTGPPGPAGQDGRPGPPGPPGARGQAGVMGFPGPKGAAGEPGKAGERGVPGPPGAVGAAGKDGEAGAQGPPGPAGPAGERGEQGPAGSPGFQGLPGPAGPPGEAGKPGEQGVPGDLGAPGPSGARGERGFPGERGVQGPPGPAGPRGSNGAPGNDGAKGDAGAPGAPGSQGAPGLQGMPGERGAAGLPGPKGDRGDAGPKGADGSPGKDGPRGLTGPIGPPGPAGAPGDKGEAGPSGPAGPTGARGAPGDRGEPGPPGPAGFAGPPGADGQPGAKGEPGDAGAKGDAGPPGPAGPTGAPGPIGNVGAPGAKGARGSAGPPGATGFPGAAGRVGPPGPSGNAGPPGPPGPAGKEGGKGPRGETGPAGRPGEVGPPGPPGPAGEKGSPGADGPAGAPGTPGPQGIGGQRGVVGLPGQRGERGFPGLPGPSGEPGKQGPSGSSGERGPPGPAGPPGLAGPPGESGREGAPGAEGSPGRDGSPGPKGDRGETGPSGPPGAPGAPGAPGPVGPAGKSGDRGETGPAGPAGPAGPAGVRGPAGPQGPRGDKGETGEQGDRGLKGHRGFSGLQGPPGPPGSPGEQGPSGASGPAGPRGPPGSAGAPGKDGLNGLPGPPGPPGPRGRTGDAGPVGPPGPPGPPGPPGPPSGAFDFSFLPQPPQEKAHDGGRYYRA.

Gln-1 bears the Pyrrolidone carboxylic acid mark. A compositionally biased stretch (basic and acidic residues) spans Gln-1–Ser-10. A nonhelical region (N-terminal) region spans residues Gln-1–Pro-17. The segment at Gln-1–Ala-1057 is disordered. Residue Lys-9 is modified to Allysine. Ser-10 is subject to Phosphoserine. Collagen-like domains follow at residues Gly-18–Lys-76, Gly-75–Asn-134, Gly-135–Glu-193, and Gly-195–Gly-252. Residues Gly-18–Pro-1031 form a triple-helical region region. 4-hydroxyproline occurs at positions 29, 32, 35, 44, 47, 50, 65, 80, 86, 95, and 101. Over residues Pro-37 to Met-56 the composition is skewed to low complexity. Over residues Asn-68–Glu-82 the composition is skewed to basic and acidic residues. Position 104 is a 5-hydroxylysine; alternate (Lys-104). A glycan (O-linked (Gal...) hydroxylysine; alternate) is linked at Lys-104. Ser-110 carries the phosphoserine modification. The span at Asp-118–Asn-134 shows a compositional bias: low complexity. 4-hydroxyproline occurs at positions 128, 131, 137, 146, and 152. The span at Pro-157–Ala-170 shows a compositional bias: low complexity. A compositionally biased stretch (pro residues) spans Pro-172–Phe-184. 11 positions are modified to 4-hydroxyproline: Pro-173, Pro-182, Pro-185, Pro-212, Pro-215, Pro-227, Pro-233, Pro-242, Pro-248, Pro-251, and Pro-266. Low complexity predominate over residues Ala-218–Lys-269. Residue Lys-269 is modified to 5-hydroxylysine. A 4-hydroxyproline mark is found at Pro-275, Pro-278, Pro-290, Pro-292, Pro-299, Pro-314, Pro-320, Pro-323, Pro-329, and Pro-335. A compositionally biased stretch (low complexity) spans Lys-287 to Gln-296. Residues Gly-324–Gly-333 show a composition bias toward gly residues. Residue Lys-344 is modified to 5-hydroxylysine. 28 positions are modified to 4-hydroxyproline: Pro-353, Pro-362, Pro-368, Pro-374, Pro-383, Pro-386, Pro-395, Pro-404, Pro-410, Pro-422, Pro-431, Pro-440, Pro-443, Pro-461, Pro-479, Pro-485, Pro-491, Pro-497, Pro-503, Pro-509, Pro-521, Pro-530, Pro-542, Pro-554, Pro-557, Pro-563, Pro-569, and Pro-578. A compositionally biased stretch (low complexity) spans Lys-377 to Arg-403. The span at Ala-412 to Pro-431 shows a compositional bias: low complexity. Residues Gln-473–Gln-500 show a composition bias toward low complexity. 2 Collagen-like domains span residues Gly-522 to Gly-579 and Gly-555 to Pro-613. Over residues Asn-539–Gln-566 the composition is skewed to low complexity. The residue at position 590 (Lys-590) is a 5-hydroxylysine. Pro-596, Pro-611, and Pro-617 each carry 4-hydroxyproline. Collagen-like domains follow at residues Gly-618–Asp-676 and Gly-678–Pro-736. The segment covering Ala-623 to Ala-637 has biased composition (low complexity). Phosphoserine is present on Ser-626. 4-hydroxyproline occurs at positions 638, 644, 647, 656, 662, 680, 689, and 698. The span at Ala-650 to Ala-677 shows a compositional bias: low complexity. The residue at position 701 (Lys-701) is a 5-hydroxylysine. The segment covering Ser-706–Val-722 has biased composition (low complexity). 4-hydroxyproline is present on residues Pro-710 and Pro-716. Pro-724 carries the post-translational modification 3-hydroxyproline. 4-hydroxyproline occurs at positions 725, 734, 737, 758, 764, 767, 776, and 785. The segment covering Glu-751–Glu-760 has biased composition (low complexity). Low complexity predominate over residues Ala-770–Pro-785. Over residues Gly-789 to Gly-798 the composition is skewed to gly residues. 10 positions are modified to 4-hydroxyproline: Pro-803, Pro-812, Pro-815, Pro-821, Pro-836, Pro-842, Pro-848, Pro-857, Pro-863, and Pro-869. Residues Gly-804–Gly-861 enclose the Collagen-like 9 domain. The segment covering Pro-835–Ala-845 has biased composition (pro residues). Residue Lys-872 is modified to 5-hydroxylysine. Residues Ser-881–Val-896 are compositionally biased toward pro residues. 4-hydroxyproline is present on residues Pro-884, Pro-887, and Pro-890. The span at Ala-917 to Pro-931 shows a compositional bias: low complexity. 2 consecutive Collagen-like domains span residues Gly-918–Pro-976 and Gly-972–Pro-1030. Positions Arg-932 to Leu-946 are enriched in basic and acidic residues. Lys-935 carries the 5-hydroxylysine modification. Lys-947 carries the post-translational modification 5-hydroxylysine; alternate. The O-linked (Gal...) hydroxylysine; alternate glycan is linked to Lys-947. A 4-hydroxyproline mark is found at Pro-959, Pro-962, Pro-965, Pro-983, Pro-998, and Pro-1001. Residues Pro-965 to Leu-997 show a composition bias toward low complexity. Pro-1003 carries the 3-hydroxyproline modification. Pro-1004 is modified (4-hydroxyproline). Over residues Val-1016–Pro-1031 the composition is skewed to pro residues. Pro-1018 bears the 3-hydroxyproline mark. A 4-hydroxyproline modification is found at Pro-1019. The residue at position 1021 (Pro-1021) is a 3-hydroxyproline. Residue Pro-1022 is modified to 4-hydroxyproline. 3-hydroxyproline is present on Pro-1024. Residues Pro-1025, Pro-1028, and Pro-1031 each carry the 4-hydroxyproline modification. Residues Ser-1032 to Tyr-1055 are nonhelical region (C-terminal). Positions Glu-1046–Ala-1057 are enriched in basic and acidic residues. Residue Lys-1047 is modified to Allysine.

The protein belongs to the fibrillar collagen family. Trimers of one alpha 2(I) and two alpha 1(I) chains. Contains mostly 4-hydroxyproline. Proline residues at the third position of the tripeptide repeating unit (G-X-Y) are hydroxylated in some or all of the chains. Post-translationally, contains 3-hydroxyproline at a few sites. This modification occurs on the first proline residue in the sequence motif Gly-Pro-Hyp, where Hyp is 4-hydroxyproline. In terms of processing, lysine residues at the third position of the tripeptide repeating unit (G-X-Y) are 5-hydroxylated in some or all of the chains. O-glycosylated on hydroxylated lysine residues. The O-linked glycan consists of a Glc-Gal disaccharide.

It localises to the secreted. It is found in the extracellular space. The protein resides in the extracellular matrix. Its function is as follows. Type I collagen is a member of group I collagen (fibrillar forming collagen). In Mammut americanum (American mastodon), this protein is Collagen alpha-1(I) chain (COL1A1).